The primary structure comprises 261 residues: Tryptophan synthase alpha chain (261 aa).

Active-site proton acceptor residues include E49 and D60.

Belongs to the TrpA family. As to quaternary structure, tetramer of two alpha and two beta chains.

The enzyme catalyses (1S,2R)-1-C-(indol-3-yl)glycerol 3-phosphate + L-serine = D-glyceraldehyde 3-phosphate + L-tryptophan + H2O. Its pathway is amino-acid biosynthesis; L-tryptophan biosynthesis; L-tryptophan from chorismate: step 5/5. Functionally, the alpha subunit is responsible for the aldol cleavage of indoleglycerol phosphate to indole and glyceraldehyde 3-phosphate. The chain is Tryptophan synthase alpha chain from Roseiflexus sp. (strain RS-1).